The sequence spans 476 residues: Aspartyl/glutamyl-tRNA(Asn/Gln) amidotransferase subunit B (476 aa).

This sequence belongs to the GatB/GatE family. GatB subfamily. Heterotrimer of A, B and C subunits.

It carries out the reaction L-glutamyl-tRNA(Gln) + L-glutamine + ATP + H2O = L-glutaminyl-tRNA(Gln) + L-glutamate + ADP + phosphate + H(+). The catalysed reaction is L-aspartyl-tRNA(Asn) + L-glutamine + ATP + H2O = L-asparaginyl-tRNA(Asn) + L-glutamate + ADP + phosphate + 2 H(+). Its function is as follows. Allows the formation of correctly charged Asn-tRNA(Asn) or Gln-tRNA(Gln) through the transamidation of misacylated Asp-tRNA(Asn) or Glu-tRNA(Gln) in organisms which lack either or both of asparaginyl-tRNA or glutaminyl-tRNA synthetases. The reaction takes place in the presence of glutamine and ATP through an activated phospho-Asp-tRNA(Asn) or phospho-Glu-tRNA(Gln). In Neisseria meningitidis serogroup B (strain ATCC BAA-335 / MC58), this protein is Aspartyl/glutamyl-tRNA(Asn/Gln) amidotransferase subunit B.